Consider the following 417-residue polypeptide: Glucose-1-phosphate adenylyltransferase (417 aa).

Residues Y105, G170, 185-186 (EK), and S203 each bind alpha-D-glucose 1-phosphate.

This sequence belongs to the bacterial/plant glucose-1-phosphate adenylyltransferase family. In terms of assembly, homotetramer.

The catalysed reaction is alpha-D-glucose 1-phosphate + ATP + H(+) = ADP-alpha-D-glucose + diphosphate. Its pathway is glycan biosynthesis; glycogen biosynthesis. Its function is as follows. Involved in the biosynthesis of ADP-glucose, a building block required for the elongation reactions to produce glycogen. Catalyzes the reaction between ATP and alpha-D-glucose 1-phosphate (G1P) to produce pyrophosphate and ADP-Glc. The polypeptide is Glucose-1-phosphate adenylyltransferase (Granulibacter bethesdensis (strain ATCC BAA-1260 / CGDNIH1)).